The following is a 201-amino-acid chain: uncharacterized protein (201 aa).

The tract at residues 121 to 141 (HHRTRPGRGPGPRPGGSAMAG) is disordered.

This is an uncharacterized protein from Mycobacterium tuberculosis (strain ATCC 25618 / H37Rv).